Reading from the N-terminus, the 248-residue chain is Ribonuclease PH (248 aa).

Residues R86 and 124-126 (GTR) each bind phosphate.

It belongs to the RNase PH family. As to quaternary structure, homohexameric ring arranged as a trimer of dimers.

It carries out the reaction tRNA(n+1) + phosphate = tRNA(n) + a ribonucleoside 5'-diphosphate. Functionally, phosphorolytic 3'-5' exoribonuclease that plays an important role in tRNA 3'-end maturation. Removes nucleotide residues following the 3'-CCA terminus of tRNAs; can also add nucleotides to the ends of RNA molecules by using nucleoside diphosphates as substrates, but this may not be physiologically important. Probably plays a role in initiation of 16S rRNA degradation (leading to ribosome degradation) during starvation. This is Ribonuclease PH from Clostridium perfringens (strain 13 / Type A).